Consider the following 291-residue polypeptide: ATP synthase gamma chain (291 aa).

The protein belongs to the ATPase gamma chain family. In terms of assembly, F-type ATPases have 2 components, CF(1) - the catalytic core - and CF(0) - the membrane proton channel. CF(1) has five subunits: alpha(3), beta(3), gamma(1), delta(1), epsilon(1). CF(0) has three main subunits: a, b and c.

The protein resides in the cell inner membrane. Functionally, produces ATP from ADP in the presence of a proton gradient across the membrane. The gamma chain is believed to be important in regulating ATPase activity and the flow of protons through the CF(0) complex. This Caulobacter vibrioides (strain NA1000 / CB15N) (Caulobacter crescentus) protein is ATP synthase gamma chain.